The chain runs to 218 residues: Octanoyltransferase (218 aa).

Positions 34–209 (ETSRDELWIV…TFSQELGYQH (176 aa)) constitute a BPL/LPL catalytic domain. Residues 73–80 (RGGQVTYH), 140–142 (SLG), and 153–155 (GLA) each bind substrate. Cysteine 171 functions as the Acyl-thioester intermediate in the catalytic mechanism.

The protein belongs to the LipB family.

The protein resides in the cytoplasm. The enzyme catalyses octanoyl-[ACP] + L-lysyl-[protein] = N(6)-octanoyl-L-lysyl-[protein] + holo-[ACP] + H(+). It participates in protein modification; protein lipoylation via endogenous pathway; protein N(6)-(lipoyl)lysine from octanoyl-[acyl-carrier-protein]: step 1/2. Functionally, catalyzes the transfer of endogenously produced octanoic acid from octanoyl-acyl-carrier-protein onto the lipoyl domains of lipoate-dependent enzymes. Lipoyl-ACP can also act as a substrate although octanoyl-ACP is likely to be the physiological substrate. The protein is Octanoyltransferase of Shewanella loihica (strain ATCC BAA-1088 / PV-4).